Consider the following 426-residue polypeptide: Hemojuvelin (426 aa).

Residues 1-35 (MGEPGQSPSPRSSHGSPPTLSTLTLLLLLCGHAHS) form the signal peptide. Tyrosine 46 is subject to Phosphotyrosine. Residue asparagine 118 is glycosylated (N-linked (GlcNAc...) asparagine). The interval 119 to 142 (CSRQGPTAPPPPRGPALPGAGSGL) is disordered. Disulfide bonds link cysteine 148-cysteine 230 and cysteine 167-cysteine 317. N-linked (GlcNAc...) asparagine glycosylation is found at asparagine 213 and asparagine 372. A lipid anchor (GPI-anchor amidated aspartate) is attached at aspartate 400. Positions 401–426 (AGVPLSSATLLAPLLSGLFVLWLCIQ) are cleaved as a propeptide — removed in mature form.

Belongs to the repulsive guidance molecule (RGM) family. As to quaternary structure, interacts with BMP2 and BMP4. Interacts with BMP6. Interacts with BMPR1B. Interacts with TMPRSS6. Autocatalytically cleaved at low pH; the two chains remain linked via two disulfide bonds. Also proteolytically processed by TMPRSS6, several fragments being released in the extracellular space; regulates HJV activity in BMP signaling and thefore iron homeostasis. In terms of tissue distribution, adult and fetal liver, heart, and skeletal muscle.

It is found in the cell membrane. In terms of biological role, acts as a bone morphogenetic protein (BMP) coreceptor. Through enhancement of BMP signaling regulates hepcidin (HAMP) expression and regulates iron homeostasis. The chain is Hemojuvelin from Homo sapiens (Human).